A 177-amino-acid chain; its full sequence is Large ribosomal subunit protein uL6 (177 aa).

The tract at residues 151–177 (LRPPEPYKGKGVRYAGENVRRKEGKKK) is disordered.

This sequence belongs to the universal ribosomal protein uL6 family. As to quaternary structure, part of the 50S ribosomal subunit.

This protein binds to the 23S rRNA, and is important in its secondary structure. It is located near the subunit interface in the base of the L7/L12 stalk, and near the tRNA binding site of the peptidyltransferase center. This chain is Large ribosomal subunit protein uL6, found in Phenylobacterium zucineum (strain HLK1).